Reading from the N-terminus, the 198-residue chain is Recombination protein RecR (198 aa).

The segment at 56 to 71 (CDICGNVSEEPTCRIC) adopts a C4-type zinc-finger fold. The 97-residue stretch at 79–175 (AVVCVVEEPK…NVTRLASGLP (97 aa)) folds into the Toprim domain.

Belongs to the RecR family.

May play a role in DNA repair. It seems to be involved in an RecBC-independent recombinational process of DNA repair. It may act with RecF and RecO. The chain is Recombination protein RecR from Saccharopolyspora erythraea (strain ATCC 11635 / DSM 40517 / JCM 4748 / NBRC 13426 / NCIMB 8594 / NRRL 2338).